A 302-amino-acid chain; its full sequence is Heme A synthase (302 aa).

The Cytoplasmic segment spans residues 1-8; that stretch reads MFSKKNLK. Residues 9 to 29 traverse the membrane as a helical segment; the sequence is WLSVLATVIMAFVQLGGALVT. Residues 30–67 lie on the Extracellular side of the membrane; it reads KTGSADGCGSDWPLCHGAFLPQNLPIQTLIELSHRAVS. A disulfide bridge links Cys-37 with Cys-44. Glu-60 is a catalytic residue. His-63 contributes to the heme o binding site. The chain crosses the membrane as a helical span at residues 68–88; it reads GLSLIVVLWLVIVAWKHIGYI. The Cytoplasmic segment spans residues 89 to 93; it reads KEVKP. The helical transmembrane segment at 94–114 threads the bilayer; that stretch reads LSCISVGFLLIQALVGAAAVM. Residues 115–122 are Extracellular-facing; that stretch reads WQQNAYVL. Residues 123–143 form a helical membrane-spanning segment; the sequence is ALHFGISLISFSSVFVLTLII. A heme o-binding site is contributed by His-125. Residues 144-161 lie on the Cytoplasmic side of the membrane; the sequence is YEVDRKYEADELFIRKPL. Residues 162–182 form a helical membrane-spanning segment; the sequence is RIYTWIMALIVYMTIYTGALV. At 183 to 215 the chain is on the extracellular side; it reads RHKEASLAYGQWPLPFNDLMPHNVQDWVNLTHR. His-214 contacts heme b. A helical membrane pass occupies residues 216–236; the sequence is GMALIAFIWILITFIHAVNNY. The Cytoplasmic segment spans residues 237–244; it reads RENRTIRY. The helical transmembrane segment at 245-265 threads the bilayer; that stretch reads GYTAAFILVILQVTTGALSII. Topologically, residues 266–271 are extracellular; that stretch reads TEVNLF. Residues 272 to 292 traverse the membrane as a helical segment; it reads IALLHALFITLLFGLIAYFII. A heme b-binding site is contributed by His-276. Over 293–302 the chain is Cytoplasmic; it reads LMLRTIRSGG.

It belongs to the COX15/CtaA family. Type 1 subfamily. As to quaternary structure, interacts with CtaB. Heme b serves as cofactor.

It localises to the cell membrane. The enzyme catalyses Fe(II)-heme o + 2 A + H2O = Fe(II)-heme a + 2 AH2. The protein operates within porphyrin-containing compound metabolism; heme A biosynthesis; heme A from heme O: step 1/1. Catalyzes the conversion of heme O to heme A by two successive hydroxylations of the methyl group at C8. The first hydroxylation forms heme I, the second hydroxylation results in an unstable dihydroxymethyl group, which spontaneously dehydrates, resulting in the formyl group of heme A. The polypeptide is Heme A synthase (Staphylococcus saprophyticus subsp. saprophyticus (strain ATCC 15305 / DSM 20229 / NCIMB 8711 / NCTC 7292 / S-41)).